The chain runs to 371 residues: Leu/Ile/Val-binding protein homolog 1 (371 aa).

Residues 1–23 (MRKTLFSGVALAAVIAFGGSAWA) form the signal peptide.

Belongs to the leucine-binding protein family.

Component of an amino-acid transport system. The chain is Leu/Ile/Val-binding protein homolog 1 from Brucella suis biovar 1 (strain 1330).